The sequence spans 279 residues: uncharacterized protein (279 aa).

The region spanning Ile-14 to Thr-71 is the HTH lysR-type domain. Positions Gln-31–Lys-50 form a DNA-binding region, H-T-H motif.

The protein belongs to the LysR transcriptional regulatory family.

This is an uncharacterized protein from Methanocaldococcus jannaschii (strain ATCC 43067 / DSM 2661 / JAL-1 / JCM 10045 / NBRC 100440) (Methanococcus jannaschii).